A 152-amino-acid polypeptide reads, in one-letter code: MFP1 attachment factor 1 (152 aa).

Disordered stretches follow at residues 1–33 and 107–152; these read MAEI…PPTQ and DTVK…ETEP. The interval 12 to 115 is WPP; sequence TVTQETQNKP…IDTVKSRSAP (104 aa). A compositionally biased stretch (polar residues) spans 134-152; that stretch reads EPSSASGLTGEVSSVETEP.

Interacts with WAP through its WPP domain. Binds to MFP1 and FPP proteins. As to expression, expressed in young tomato leaves, young fruits, and flowers (at protein level).

Its subcellular location is the nucleus envelope. It localises to the cytoplasm. The protein resides in the golgi apparatus. The protein localises to the nucleus. It is found in the nucleus matrix. The protein is MFP1 attachment factor 1 (MAF1) of Solanum lycopersicum (Tomato).